Reading from the N-terminus, the 625-residue chain is Mitochondrial Rho GTPase 1 (625 aa).

Over 1-601 (MSDDETLADV…LRRVFYLNDS (601 aa)) the chain is Cytoplasmic. The 168-residue stretch at 3–170 (DDETLADVRI…EIFYYAQKAV (168 aa)) folds into the Miro 1 domain. GTP is bound by residues 16–23 (GDEGCGKT), 62–66 (DLSIK), and 123–126 (NKSD). EF-hand domains are found at residues 188 to 223 (RARKALIRVFKICDRDNDGYLSDTELNDFQKLCFGI) and 308 to 343 (EGVQFVSALFEKYDEDKDGCLSPSELQNLFSVCPVP). Ca(2+) is bound by residues D201, D203, D205, Y207, E212, D321, D323, D325, C327, and E332. Positions 420–625 (HGTDRKVFQC…LAGFLVLKNL (206 aa)) constitute a Miro 2 domain. Residues 433 to 440 (GAKDAGKT), 470 to 474 (RVKEE), and 537 to 540 (TKVE) contribute to the GTP site. A helical; Anchor for type IV membrane protein transmembrane segment spans residues 602-622 (NLLSKITFGAAIVALAGFLVL). The Mitochondrial intermembrane segment spans residues 623 to 625 (KNL).

The protein belongs to the mitochondrial Rho GTPase family.

It localises to the mitochondrion outer membrane. Its function is as follows. Mitochondrial GTPase involved in mitochondrial trafficking. Probably involved in control of anterograde transport of mitochondria and their subcellular distribution. Plays a role in maintaining mitochondrial morphology. The sequence is that of Mitochondrial Rho GTPase 1 from Caenorhabditis elegans.